The chain runs to 159 residues: 2-C-methyl-D-erythritol 2,4-cyclodiphosphate synthase (159 aa).

The a divalent metal cation site is built by aspartate 8 and histidine 10. 4-CDP-2-C-methyl-D-erythritol 2-phosphate contacts are provided by residues 8-10 (DVH) and 34-35 (HS). Histidine 42 contacts a divalent metal cation. 4-CDP-2-C-methyl-D-erythritol 2-phosphate contacts are provided by residues 56 to 58 (DIG), 61 to 65 (FPDTD), 132 to 135 (TTTE), phenylalanine 139, and arginine 142.

Belongs to the IspF family. As to quaternary structure, homotrimer. It depends on a divalent metal cation as a cofactor.

It carries out the reaction 4-CDP-2-C-methyl-D-erythritol 2-phosphate = 2-C-methyl-D-erythritol 2,4-cyclic diphosphate + CMP. It participates in isoprenoid biosynthesis; isopentenyl diphosphate biosynthesis via DXP pathway; isopentenyl diphosphate from 1-deoxy-D-xylulose 5-phosphate: step 4/6. Its function is as follows. Involved in the biosynthesis of isopentenyl diphosphate (IPP) and dimethylallyl diphosphate (DMAPP), two major building blocks of isoprenoid compounds. Catalyzes the conversion of 4-diphosphocytidyl-2-C-methyl-D-erythritol 2-phosphate (CDP-ME2P) to 2-C-methyl-D-erythritol 2,4-cyclodiphosphate (ME-CPP) with a corresponding release of cytidine 5-monophosphate (CMP). The polypeptide is 2-C-methyl-D-erythritol 2,4-cyclodiphosphate synthase (Finegoldia magna (strain ATCC 29328 / DSM 20472 / WAL 2508) (Peptostreptococcus magnus)).